The chain runs to 115 residues: MTRVKRGNVARKRRKQVLNLASGFRGSSSRLFRTAQQQTMKALSYSYRDRQQKKREFCGLWVTRLNAAARLYGLNYTNFRHNLKKAGIQLNRKVLSQVALRDKQAFEQLILLVKD.

Belongs to the bacterial ribosomal protein bL20 family.

It localises to the plastid. The protein resides in the chloroplast. Binds directly to 23S ribosomal RNA and is necessary for the in vitro assembly process of the 50S ribosomal subunit. It is not involved in the protein synthesizing functions of that subunit. The chain is Large ribosomal subunit protein bL20c (rpl20) from Chlorella vulgaris (Green alga).